A 675-amino-acid polypeptide reads, in one-letter code: Vitamin K-dependent protein S (675 aa).

The first 24 residues, 1–24 (MRVLSARFRVLLACLALVIPVSET), serve as a signal peptide directing secretion. A propeptide spanning residues 25–41 (NFLSKERASQVLVRKRR) is cleaved from the precursor. The Gla domain maps to 42–87 (ANTLFEETMKGNLERECIEELCNKEEAREVFENNPETDYFYPKYLG). 11 positions are modified to 4-carboxyglutamate: glutamate 47, glutamate 48, glutamate 55, glutamate 57, glutamate 60, glutamate 61, glutamate 66, glutamate 67, glutamate 70, glutamate 73, and glutamate 77. Cysteine 58 and cysteine 63 form a disulfide bridge. The interval 88-116 (CLGAFRVGSFHAARQSANAYPDLRSCVKA) is thrombin-sensitive. The region spanning 117 to 155 (ISDQCDPIPCNEDGYLACQDGQAAFTCFCKPGWQGDRCQ) is the EGF-like 1 domain. Cystine bridges form between cysteine 121–cysteine 134, cysteine 126–cysteine 143, cysteine 145–cysteine 154, cysteine 161–cysteine 175, cysteine 171–cysteine 184, cysteine 186–cysteine 199, cysteine 205–cysteine 217, cysteine 212–cysteine 226, cysteine 228–cysteine 241, cysteine 247–cysteine 256, cysteine 252–cysteine 265, cysteine 267–cysteine 282, and cysteine 449–cysteine 475. At aspartate 136 the chain carries (3R)-3-hydroxyaspartate. The region spanning 157-200 (DVNECKDPSNVNGGCSQICDNTPGSYHCSCKRGFAMLPNKKDCK) is the EGF-like 2; calcium-binding domain. Residues 201-242 (DLDECALKPSVCGTAVCKNIPGDFECECPDGYRYDPSSKSCK) enclose the EGF-like 3; calcium-binding domain. The EGF-like 4; calcium-binding domain maps to 243–283 (DVDECSENMCAQLCVNFPGGYSCYCDGKKGFKLAQDQKSCE). Laminin G-like domains are found at residues 299-475 (LLYL…NKHC) and 484-665 (YYPG…AHSC). N-linked (GlcNAc...) asparagine glycans are attached at residues asparagine 499 and asparagine 509. A disulfide bridge links cysteine 638 with cysteine 665.

In terms of processing, the iron and 2-oxoglutarate dependent 3-hydroxylation of aspartate and asparagine is (R) stereospecific within EGF domains. Plasma.

It is found in the secreted. Anticoagulant plasma protein; it is a cofactor to activated protein C in the degradation of coagulation factors Va and VIIIa. It helps to prevent coagulation and stimulating fibrinolysis. The sequence is that of Vitamin K-dependent protein S (Pros1) from Mus musculus (Mouse).